We begin with the raw amino-acid sequence, 101 residues long: NAD(P)H-quinone oxidoreductase subunit 4L, chloroplastic (101 aa).

3 helical membrane passes run 2-22 (MLEHVLVLSSYLLSIGIYGLI), 32-52 (MCLELILNAVNINFVTFSDLF), and 61-81 (IFSIFVIGIAAAEAAIGLAII).

The protein belongs to the complex I subunit 4L family. As to quaternary structure, NDH is composed of at least 16 different subunits, 5 of which are encoded in the nucleus.

The protein localises to the plastid. It localises to the chloroplast thylakoid membrane. The enzyme catalyses a plastoquinone + NADH + (n+1) H(+)(in) = a plastoquinol + NAD(+) + n H(+)(out). It carries out the reaction a plastoquinone + NADPH + (n+1) H(+)(in) = a plastoquinol + NADP(+) + n H(+)(out). Functionally, NDH shuttles electrons from NAD(P)H:plastoquinone, via FMN and iron-sulfur (Fe-S) centers, to quinones in the photosynthetic chain and possibly in a chloroplast respiratory chain. The immediate electron acceptor for the enzyme in this species is believed to be plastoquinone. Couples the redox reaction to proton translocation, and thus conserves the redox energy in a proton gradient. This chain is NAD(P)H-quinone oxidoreductase subunit 4L, chloroplastic, found in Ranunculus macranthus (Large buttercup).